A 620-amino-acid polypeptide reads, in one-letter code: Chaperone protein HscA homolog (620 aa).

The protein belongs to the heat shock protein 70 family.

Its function is as follows. Chaperone involved in the maturation of iron-sulfur cluster-containing proteins. Has a low intrinsic ATPase activity which is markedly stimulated by HscB. This is Chaperone protein HscA homolog from Bordetella pertussis (strain Tohama I / ATCC BAA-589 / NCTC 13251).